The chain runs to 403 residues: MKIRDAYTIVTCPGRNFVTLKIVTESGTHGIGDATLNGREMAVAAYLDEHVVPALIGRDAGRIEDTWQYLYRGAYWRRGPVTMTAIAAVDMALWDIKAKAAGMPLYQLLGGKSRERVMTYAHCTGQTIEDCLGEVARHVELGYRAVRVQSGVPGIETTYGVAKTPGERYEPADSSLPAEHVWSTEKYLNHAPKLFAAVRERFGDDLHVLHDVHHRLTPIEAARLGKAVEPYHLFWLEDCVPAENQESLRLIREHTTTPLAIGEVFNSIHDCRELIQNQWIDYIRMPLTHGGGITAMRRVADLASLYHVRTGFHGPTDLSPVCLGAAIHFDTWVPNFGIQEHMPHTDETDAVFPHDYRFEDGHFLAGESPGHGVDIDEELAAKYPYERASLPVNRLEDGTLWHW.

Residues N37 and H122 each contribute to the substrate site. The Proton donor/acceptor role is filled by Y159. D211 serves as a coordination point for Mg(2+). H213 acts as the Proton donor/acceptor in catalysis. Mg(2+)-binding residues include E237 and E263. Residues E263, R284, H313, D317, and E340 each coordinate substrate.

It belongs to the mandelate racemase/muconate lactonizing enzyme family. GalD subfamily. Mg(2+) serves as cofactor.

The catalysed reaction is D-mannonate = 2-dehydro-3-deoxy-D-gluconate + H2O. It catalyses the reaction D-gluconate = 2-dehydro-3-deoxy-D-gluconate + H2O. In terms of biological role, has low dehydratase activity with D-mannonate and D-gluconate, suggesting that these are not physiological substrates and that it has no significant role in the in vivo degradation of these compounds. Has no detectable activity with a panel of 70 other acid sugars (in vitro). The chain is D-galactonate dehydratase family member ManD (manD) from Chromohalobacter salexigens (strain ATCC BAA-138 / DSM 3043 / CIP 106854 / NCIMB 13768 / 1H11).